A 313-amino-acid polypeptide reads, in one-letter code: Malate dehydrogenase (313 aa).

Residue 11 to 16 (GAGHTG) participates in NAD(+) binding. Substrate is bound by residues arginine 86 and arginine 92. NAD(+) is bound by residues asparagine 99 and 122–124 (LTN). Substrate is bound by residues asparagine 124 and arginine 155. Histidine 179 acts as the Proton acceptor in catalysis.

Belongs to the LDH/MDH superfamily. MDH type 3 family.

It carries out the reaction (S)-malate + NAD(+) = oxaloacetate + NADH + H(+). Its function is as follows. Catalyzes the reversible oxidation of malate to oxaloacetate. The chain is Malate dehydrogenase from Staphylococcus epidermidis (strain ATCC 35984 / DSM 28319 / BCRC 17069 / CCUG 31568 / BM 3577 / RP62A).